We begin with the raw amino-acid sequence, 568 residues long: Oxygen-dependent choline dehydrogenase (568 aa).

Residue 8 to 37 (DYIIIGAGSAGNTLAARLTEDAGVTVLLLE) coordinates FAD. Residue His477 is the Proton acceptor of the active site.

The protein belongs to the GMC oxidoreductase family. It depends on FAD as a cofactor.

It catalyses the reaction choline + A = betaine aldehyde + AH2. The catalysed reaction is betaine aldehyde + NAD(+) + H2O = glycine betaine + NADH + 2 H(+). Its pathway is amine and polyamine biosynthesis; betaine biosynthesis via choline pathway; betaine aldehyde from choline (cytochrome c reductase route): step 1/1. Its function is as follows. Involved in the biosynthesis of the osmoprotectant glycine betaine. Catalyzes the oxidation of choline to betaine aldehyde and betaine aldehyde to glycine betaine at the same rate. The chain is Oxygen-dependent choline dehydrogenase from Pseudomonas syringae pv. syringae (strain B728a).